Reading from the N-terminus, the 62-residue chain is Cytochrome b-c1 complex subunit 6-2, mitochondrial (62 aa).

2 cysteine pairs are disulfide-bonded: C17/C59 and C31/C45.

The protein belongs to the UQCRH/QCR6 family. Component of the ubiquinol-cytochrome c oxidoreductase (cytochrome b-c1 complex, complex III, CIII), a multisubunit enzyme composed of 10 subunits. The complex is composed of 3 respiratory subunits cytochrome b (MT-CYB), cytochrome c1 (CYC1-1 or CYC1-2) and Rieske protein (UCR1-1 or UCR1-2), 2 core protein subunits MPPalpha1 (or MPPalpha2) and MPPB, and 5 low-molecular weight protein subunits QCR7-1 (or QCR7-2), UCRQ-1 (or UCRQ-2), QCR9, UCRY and probably QCR6-1 (or QCR6-2). The complex exists as an obligatory dimer and forms supercomplexes (SCs) in the inner mitochondrial membrane with NADH-ubiquinone oxidoreductase (complex I, CI), resulting in different assemblies (supercomplexes SCI(1)III(2) and SCI(2)III(4)).

It is found in the mitochondrion inner membrane. Functionally, component of the ubiquinol-cytochrome c oxidoreductase, a multisubunit transmembrane complex that is part of the mitochondrial electron transport chain which drives oxidative phosphorylation. The respiratory chain contains 3 multisubunit complexes succinate dehydrogenase (complex II, CII), ubiquinol-cytochrome c oxidoreductase (cytochrome b-c1 complex, complex III, CIII) and cytochrome c oxidase (complex IV, CIV), that cooperate to transfer electrons derived from NADH and succinate to molecular oxygen, creating an electrochemical gradient over the inner membrane that drives transmembrane transport and the ATP synthase. The cytochrome b-c1 complex catalyzes electron transfer from ubiquinol to cytochrome c, linking this redox reaction to translocation of protons across the mitochondrial inner membrane, with protons being carried across the membrane as hydrogens on the quinol. In the process called Q cycle, 2 protons are consumed from the matrix, 4 protons are released into the intermembrane space and 2 electrons are passed to cytochrome c. The polypeptide is Cytochrome b-c1 complex subunit 6-2, mitochondrial (QCR6-2) (Arabidopsis thaliana (Mouse-ear cress)).